A 173-amino-acid polypeptide reads, in one-letter code: Small ribosomal subunit protein uS5 (173 aa).

Residues 17–80 enclose the S5 DRBM domain; the sequence is WQERVIQIRR…SDAKKHVVDV (64 aa).

It belongs to the universal ribosomal protein uS5 family. As to quaternary structure, part of the 30S ribosomal subunit. Contacts proteins S4 and S8.

In terms of biological role, with S4 and S12 plays an important role in translational accuracy. Located at the back of the 30S subunit body where it stabilizes the conformation of the head with respect to the body. In Picosynechococcus sp. (strain ATCC 27264 / PCC 7002 / PR-6) (Agmenellum quadruplicatum), this protein is Small ribosomal subunit protein uS5.